The following is an 87-amino-acid chain: Small ribosomal subunit protein uS15c (87 aa).

It belongs to the universal ribosomal protein uS15 family. In terms of assembly, part of the 30S ribosomal subunit.

Its subcellular location is the plastid. It is found in the chloroplast. The chain is Small ribosomal subunit protein uS15c (rps15) from Atropa belladonna (Belladonna).